Here is a 77-residue protein sequence, read N- to C-terminus: Omega-conotoxin-like SO-5 (77 aa).

The first 22 residues, 1-22 (MKLTCVMIVAVLLLTACQLITA), serve as a signal peptide directing secretion. Residues 23 to 42 (DDSRGTQKHRSLRSTTKVSK) constitute a propeptide that is removed on maturation. 3 cysteine pairs are disulfide-bonded: Cys46–Cys61, Cys53–Cys64, and Cys60–Cys71.

This sequence belongs to the conotoxin O1 superfamily. Expressed by the venom duct.

The protein localises to the secreted. In terms of biological role, omega-conotoxins act at presynaptic membranes, they bind and block voltage-gated calcium channels (Cav). In Conus striatus (Striated cone), this protein is Omega-conotoxin-like SO-5 (SO5).